A 219-amino-acid polypeptide reads, in one-letter code: uncharacterized protein (219 aa).

Residues 42–71 (RQPRVVPVTSSDPEVVDDEDDEDQSDDSDE) form a disordered region. A compositionally biased stretch (low complexity) spans 45–54 (RVVPVTSSDP). Over residues 55–71 (EVVDDEDDEDQSDDSDE) the composition is skewed to acidic residues.

This is an uncharacterized protein from Dryophytes versicolor (chameleon treefrog).